A 164-amino-acid polypeptide reads, in one-letter code: Large ribosomal subunit protein uL10 (164 aa).

The protein belongs to the universal ribosomal protein uL10 family. Part of the ribosomal stalk of the 50S ribosomal subunit. The N-terminus interacts with L11 and the large rRNA to form the base of the stalk. The C-terminus forms an elongated spine to which L12 dimers bind in a sequential fashion forming a multimeric L10(L12)X complex.

In terms of biological role, forms part of the ribosomal stalk, playing a central role in the interaction of the ribosome with GTP-bound translation factors. This chain is Large ribosomal subunit protein uL10, found in Helicobacter pylori (strain HPAG1).